A 185-amino-acid chain; its full sequence is CASP-like protein 2D1 (185 aa).

The Cytoplasmic portion of the chain corresponds to 1 to 15 (MRTHIDDSASGKNHH). The chain crosses the membrane as a helical span at residues 16 to 36 (LPMLWFFDSSLRLCAIPLSVA). The Extracellular segment spans residues 37-64 (TMWITVTNKEDNSSYGMLKYNNLSALKY). N48 and N58 each carry an N-linked (GlcNAc...) asparagine glycan. A helical membrane pass occupies residues 65–85 (MVLVSALCACYALLAAACSLV). The Cytoplasmic segment spans residues 86-92 (RCFVSKA). Residues 93–113 (WIFFVSDQIVAYLAITSVAAV) form a helical membrane-spanning segment. At 114–145 (MEMYYLAYNGAKEDSWSEACSSYGSFCSKVKL) the chain is on the extracellular side. Residues 146–166 (ALILHTITFCCFFVIAVISAF) form a helical membrane-spanning segment. The Cytoplasmic segment spans residues 167 to 185 (RAFSVFDPPFVNSQEVQGD).

The protein belongs to the Casparian strip membrane proteins (CASP) family. As to quaternary structure, homodimer and heterodimers.

It is found in the cell membrane. The sequence is that of CASP-like protein 2D1 from Glycine max (Soybean).